Reading from the N-terminus, the 191-residue chain is UPF0312 protein Shew185_3055 (191 aa).

An N-terminal signal peptide occupies residues 1–22 (MKKQLLSALIGASLLAPMAASA).

The protein belongs to the UPF0312 family. Type 1 subfamily.

It is found in the periplasm. The chain is UPF0312 protein Shew185_3055 from Shewanella baltica (strain OS185).